A 607-amino-acid polypeptide reads, in one-letter code: V-type proton ATPase catalytic subunit A (607 aa).

246 to 253 is a binding site for ATP; the sequence is GAFGCGKT.

This sequence belongs to the ATPase alpha/beta chains family. As to quaternary structure, V-ATPase is a heteromultimeric enzyme composed of a peripheral catalytic V1 complex (components A to H) attached to an integral membrane V0 proton pore complex (components: a, c, c', c'', d, e, f and VOA1).

The protein resides in the vacuole membrane. It catalyses the reaction ATP + H2O + 4 H(+)(in) = ADP + phosphate + 5 H(+)(out). Catalytic subunit of the V1 complex of vacuolar(H+)-ATPase (V-ATPase), a multisubunit enzyme composed of a peripheral complex (V1) that hydrolyzes ATP and a membrane integral complex (V0) that translocates protons. V-ATPase is responsible for acidifying and maintaining the pH of intracellular compartments. The protein is V-type proton ATPase catalytic subunit A (vma-1) of Neurospora crassa (strain ATCC 24698 / 74-OR23-1A / CBS 708.71 / DSM 1257 / FGSC 987).